The primary structure comprises 363 residues: Peroxisomal (S)-2-hydroxyacid oxidase GLO3 (363 aa).

An FMN hydroxy acid dehydrogenase domain is found at 1 to 357 (MDQIVNVDEF…TRNHVRTENE (357 aa)). Residues 78–80 (PTG), serine 107, 128–130 (QIY), and threonine 156 contribute to the FMN site. Tyrosine 130 lines the a 2-oxocarboxylate pocket. Residue arginine 165 participates in a 2-oxocarboxylate binding. Residues lysine 228 and serine 250 each contribute to the FMN site. The active-site Proton acceptor is histidine 252. Arginine 255 is a binding site for a 2-oxocarboxylate. FMN is bound by residues 283 to 287 (DGGVR) and 306 to 307 (GR). The short motif at 361–363 (SML) is the Microbody targeting signal element.

This sequence belongs to the FMN-dependent alpha-hydroxy acid dehydrogenase family. Homotetramer. FMN is required as a cofactor.

It is found in the peroxisome. It catalyses the reaction a (2S)-2-hydroxycarboxylate + O2 = a 2-oxocarboxylate + H2O2. The enzyme catalyses 2-hydroxy-4-methylpentanoate + O2 = 4-methyl-2-oxopentanoate + H2O2. The catalysed reaction is 2-hydroxyhexanoate + O2 = 2-oxohexanoate + H2O2. It carries out the reaction 2-hydroxyoctanoate + O2 = 2-oxooctanoate + H2O2. Functionally, oxidase that catalyzes the oxidation of a broad range of 2-hydroxyacids to the corresponding 2-oxoacids, with a reduction of O2 to H2O2. Displays the highest activity with leucic acid (2-hydroxy-4-methylpentanoate) and has intermediate activity with 2-hydroxyhexanoate and 2-hydroxyoctanote. Shows lower activity with 2-hydroxydodecanoate, valic acid, and isoleucic acid and extremely low activity with glycolate and L-lactate. Cannot use 2-hydroxyhexadecanoate or D-lactate as substrates. May be involved in the conversion or degradation of 2-hydroxyacids produced during the metabolism of fatty acids or amino acids. This chain is Peroxisomal (S)-2-hydroxyacid oxidase GLO3 (GLO3), found in Arabidopsis thaliana (Mouse-ear cress).